The following is a 372-amino-acid chain: Cytochrome b (372 aa).

4 helical membrane passes run 25–45 (FGSMLLTCSALQIMTGFFLSM), 69–90 (WMMQNLHAIGASMFFICVYIHV), 105–125 (WLSGTTLLIMLMATAFFGYVL), and 170–190 (FFALHFILPFGIISLSSLHIM). Residues histidine 75 and histidine 89 each contribute to the heme b site. Residues histidine 174 and histidine 188 each coordinate heme b. Residue histidine 193 coordinates a ubiquinone. The next 4 helical transmembrane spans lie at 218-238 (YKDLFMISSMIMIMLLTISFI), 280-300 (LGGALALAMSITILLTVPFTH), 312-332 (FMQLMFWTLVTTFMIITWTAT), and 339-358 (YTMISQVTSSLYFMFFMSNP).

The protein belongs to the cytochrome b family. As to quaternary structure, the cytochrome bc1 complex contains 3 respiratory subunits (MT-CYB, CYC1 and UQCRFS1), 2 core proteins (UQCRC1 and UQCRC2) and probably 6 low-molecular weight proteins. Heme b is required as a cofactor.

It is found in the mitochondrion inner membrane. Component of the ubiquinol-cytochrome c reductase complex (complex III or cytochrome b-c1 complex) that is part of the mitochondrial respiratory chain. The b-c1 complex mediates electron transfer from ubiquinol to cytochrome c. Contributes to the generation of a proton gradient across the mitochondrial membrane that is then used for ATP synthesis. The polypeptide is Cytochrome b (MT-CYB) (Acrantophis dumerili (Dumeril's ground boa)).